Consider the following 486-residue polypeptide: Probable transporter MCH1 (486 aa).

6 helical membrane passes run 31 to 51 (ISFFISLFSCLTSGSIMLFSL), 69 to 89 (FIASLSAIGMYLCLPVLGYLA), 91 to 111 (CYGPSLLSLISIWFFVPSYFV), 132 to 152 (FGICFFFIGLATSSLYFSSLL), 164 to 184 (LAISLPVTCYGLSTLLGSQLM), and 204 to 224 (FFGVLYLVMGILNFVSSSVVS). The interval 236-260 (EMEEADEESPLMTSRSRHSHHSCED) is disordered. A helical membrane pass occupies residues 280-300 (FINFLKDKSAWLLLASLILNI). A glycan (N-linked (GlcNAc...) asparagine) is linked at asparagine 322. Helical transmembrane passes span 327–348 (VSIMAASSTVTRLAMGGLSDYL) and 357–377 (ICRVNLLIINLAIGIVGQFMV). Asparagine 390 carries N-linked (GlcNAc...) asparagine glycosylation. 2 helical membrane passes run 395-415 (GGLFTIYPTIVASIWGIDMMG) and 417-437 (TWGSFMIAPAIGSIGFSIFYG). N-linked (GlcNAc...) asparagine glycosylation is present at asparagine 457. The helical transmembrane segment at 458–478 (LTAVGLSVSLILIIIVWKGIW) threads the bilayer.

It belongs to the major facilitator superfamily.

It localises to the vacuole membrane. Probable transporter. The protein is Probable transporter MCH1 (MCH1) of Debaryomyces hansenii (strain ATCC 36239 / CBS 767 / BCRC 21394 / JCM 1990 / NBRC 0083 / IGC 2968) (Yeast).